The chain runs to 484 residues: Nuclear rim protein 1 (484 aa).

Position 3 is a phosphoserine (S3). The next 2 helical transmembrane spans lie at 145–165 (FTIF…MFGY) and 252–272 (TAIV…AIVF). Positions 416–457 (SSNENLEKGGAFLPNQDQNRPSKSLSPLRKTPLSARQKRFEG) are disordered. Residue S417 is modified to Phosphoserine. Residues 430-440 (NQDQNRPSKSL) show a composition bias toward polar residues. A Phosphoserine modification is found at S474.

The protein belongs to the NUR1 family. As to quaternary structure, interacts with CSM1.

It is found in the nucleus membrane. In terms of biological role, member of a perinuclear network that controls recombination at multiple loci to maintain genome stability. Required for rDNA repeat stability. In Saccharomyces cerevisiae (strain Lalvin EC1118 / Prise de mousse) (Baker's yeast), this protein is Nuclear rim protein 1 (NUR1).